The following is a 182-amino-acid chain: A-type ATP synthase subunit E (182 aa).

Belongs to the V-ATPase E subunit family. Has multiple subunits with at least A(3), B(3), C, D, E, F, H, I and proteolipid K(x).

The protein resides in the cell membrane. Functionally, component of the A-type ATP synthase that produces ATP from ADP in the presence of a proton gradient across the membrane. The protein is A-type ATP synthase subunit E of Methanothrix thermoacetophila (strain DSM 6194 / JCM 14653 / NBRC 101360 / PT) (Methanosaeta thermophila).